The chain runs to 102 residues: Small ribosomal subunit protein uS10 (102 aa).

Belongs to the universal ribosomal protein uS10 family. Part of the 30S ribosomal subunit.

Its function is as follows. Involved in the binding of tRNA to the ribosomes. The chain is Small ribosomal subunit protein uS10 from Methylobacterium nodulans (strain LMG 21967 / CNCM I-2342 / ORS 2060).